Consider the following 247-residue polypeptide: Probable transcriptional regulatory protein PMT_1423 (247 aa).

Belongs to the TACO1 family.

Its subcellular location is the cytoplasm. The sequence is that of Probable transcriptional regulatory protein PMT_1423 from Prochlorococcus marinus (strain MIT 9313).